The primary structure comprises 293 residues: SAGA-associated factor 29 (293 aa).

Residues 12–88 (ELLAELQRLL…KALDKIAEIK (77 aa)) are a coiled coil. The SGF29 C-terminal domain occupies 152-293 (GDYVAKPGDK…VVACKETKKK (142 aa)). Histone H3K4me3 N-terminus binding stretches follow at residues 194 to 196 (DID) and 240 to 243 (QTTC). Residues 264-266 (FED) form a histone H3K4me3 binding region.

It belongs to the SGF29 family. Interacts with dimethylated and trimethylated 'Lys-4' of histone H3 (H3K4me2 and H3K4me3), with a preference for the trimethylated form (H3K4me3). Component of some SAGA-type complexes. Component of the ADA2A-containing complex (ATAC).

It localises to the nucleus. Its function is as follows. Chromatin reader component of some histone acetyltransferase (HAT) SAGA-type complexes like the TFTC-HAT, ATAC or STAGA complexes. SGF29 specifically recognizes and binds methylated 'Lys-4' of histone H3 (H3K4me), with a preference for trimethylated form (H3K4me3). In the SAGA-type complexes, SGF29 is required to recruit complexes to H3K4me. Also binds non-histone proteins that are methylated on Lys residues. This is SAGA-associated factor 29 from Gallus gallus (Chicken).